The following is a 64-amino-acid chain: Lantipeptide Flvbeta.d (64 aa).

Residues 1–31 constitute a propeptide, cleaved by FlvT; that stretch reads MDNNTEKFNELAAIADESELNEMLDENITGA. A cross-link (lanthionine (Ser-Cys); by FlvM2) is located at residues 33–37; the sequence is STIQC. 2 positions are modified to 2,3-didehydrobutyrine; by FlvM2: Thr34 and Thr41. 3 consecutive cross-links (beta-methyllanthionine (Thr-Cys); by FlvM2) follow at residues 44-52, 55-58, and 59-62; these read TILSVVFDC, TSAC, and TPPC. A cross-link (lanthionine (Ser-Cys); by FlvM2) is located at residues 47 to 53; it reads SVVFDCC.

Contains LL-lanthionine, DL-lanthionine, and DL-beta-methyllanthionine, when coepressed in E.coli with the flavecin synthetase FlvM2.

It is found in the secreted. Its function is as follows. Lanthionine-containing peptide that does probably not show antibacterial activity, since its analog [+2]Flvbeta.d does not show antibacterial activity against M.luteus. Also does not show antibiotic activity when tested with [Del2]Flvalpha.a, an analog of Flvalpha.a, which is encoded by the same operon than Flvbeta.d. The bactericidal activity of lantibiotics is based on depolarization of energized bacterial cytoplasmic membranes, initiated by the formation of aqueous transmembrane pores. In Ruminococcus flavefaciens, this protein is Lantipeptide Flvbeta.d.